Here is a 136-residue protein sequence, read N- to C-terminus: Large ribosomal subunit protein bL17 (136 aa).

This sequence belongs to the bacterial ribosomal protein bL17 family. Part of the 50S ribosomal subunit. Contacts protein L32.

This is Large ribosomal subunit protein bL17 from Rhodopseudomonas palustris (strain BisA53).